The following is a 142-amino-acid chain: Large ribosomal subunit protein uL16 (142 aa).

The protein belongs to the universal ribosomal protein uL16 family. As to quaternary structure, part of the 50S ribosomal subunit.

In terms of biological role, binds 23S rRNA and is also seen to make contacts with the A and possibly P site tRNAs. In Phenylobacterium zucineum (strain HLK1), this protein is Large ribosomal subunit protein uL16.